The sequence spans 348 residues: Centromere protein L (348 aa).

It belongs to the CENP-L/IML3 family.

It is found in the nucleus. It localises to the chromosome. The protein resides in the centromere. In terms of biological role, probable component of a centromeric complex involved in assembly of kinetochore proteins, mitotic progression and chromosome segregation. The protein is Centromere protein L (cenpl) of Xenopus tropicalis (Western clawed frog).